A 270-amino-acid polypeptide reads, in one-letter code: Putative pyruvate, phosphate dikinase regulatory protein (270 aa).

147–154 contributes to the ADP binding site; it reads GVSRSSKT.

The protein belongs to the pyruvate, phosphate/water dikinase regulatory protein family. PDRP subfamily.

It catalyses the reaction N(tele)-phospho-L-histidyl/L-threonyl-[pyruvate, phosphate dikinase] + ADP = N(tele)-phospho-L-histidyl/O-phospho-L-threonyl-[pyruvate, phosphate dikinase] + AMP + H(+). It carries out the reaction N(tele)-phospho-L-histidyl/O-phospho-L-threonyl-[pyruvate, phosphate dikinase] + phosphate + H(+) = N(tele)-phospho-L-histidyl/L-threonyl-[pyruvate, phosphate dikinase] + diphosphate. Functionally, bifunctional serine/threonine kinase and phosphorylase involved in the regulation of the pyruvate, phosphate dikinase (PPDK) by catalyzing its phosphorylation/dephosphorylation. The sequence is that of Putative pyruvate, phosphate dikinase regulatory protein from Citrifermentans bemidjiense (strain ATCC BAA-1014 / DSM 16622 / JCM 12645 / Bem) (Geobacter bemidjiensis).